The primary structure comprises 76 residues: MKKDIHPKLHKATVRCHCGYESELYSTIGEEVSTEICSNCHPFYTGKQRFVDTAGRIDRFKKKFANFDAASKVKGN.

Zn(2+) contacts are provided by Cys16, Cys18, Cys37, and Cys40.

It belongs to the bacterial ribosomal protein bL31 family. Type A subfamily. Part of the 50S ribosomal subunit. Requires Zn(2+) as cofactor.

Its function is as follows. Binds the 23S rRNA. The chain is Large ribosomal subunit protein bL31 from Maridesulfovibrio salexigens (strain ATCC 14822 / DSM 2638 / NCIMB 8403 / VKM B-1763) (Desulfovibrio salexigens).